A 235-amino-acid polypeptide reads, in one-letter code: Ribosomal RNA large subunit methyltransferase E (235 aa).

S-adenosyl-L-methionine contacts are provided by Gly76, Trp78, Asp99, Asp115, and Asp139. Catalysis depends on Lys179, which acts as the Proton acceptor.

The protein belongs to the class I-like SAM-binding methyltransferase superfamily. RNA methyltransferase RlmE family.

Its subcellular location is the cytoplasm. It catalyses the reaction uridine(2552) in 23S rRNA + S-adenosyl-L-methionine = 2'-O-methyluridine(2552) in 23S rRNA + S-adenosyl-L-homocysteine + H(+). In terms of biological role, specifically methylates the uridine in position 2552 of 23S rRNA at the 2'-O position of the ribose in the fully assembled 50S ribosomal subunit. The sequence is that of Ribosomal RNA large subunit methyltransferase E from Rhodopseudomonas palustris (strain BisB5).